The following is a 401-amino-acid chain: Adaptive-response sensory kinase SasA (401 aa).

The Histidine kinase domain occupies 175–400; sequence MLVHDLRNPL…WFHFTLPVYP (226 aa). His178 is subject to Phosphohistidine; by autocatalysis.

In terms of assembly, homooligomerizes. Interacts with KaiC. Participates in the KaiABC clock complex, whose core is composed of a KaiC homohexamer, 6 KaiB and up to 6 KaiA dimers. SasA and KaiB(fs) compete to bind to KaiC.

It catalyses the reaction ATP + protein L-histidine = ADP + protein N-phospho-L-histidine.. Member of the two-component regulatory system SasA/RpaA involved in genome-wide circadian gene expression. One of several clock output pathways. Participates in the Kai clock protein complex, the main circadian regulator in cyanobacteria, via its interaction with KaiC. KaiC enhances the autophosphorylation activity of SasA, which then transfers its phosphate group to RpaA to activate it. In addition to its output function, recruits fold-shifted KaiB (KaiB(fs)) to KaiC to cooperatively form the KaiB(6):KaiC(6) complex (independent of SasA kinase activity). Required for robustness of the circadian rhythm of gene expression and is involved in clock output, also required for adaptation to light/dark cycles. In Nostoc sp. (strain PCC 7120 / SAG 25.82 / UTEX 2576), this protein is Adaptive-response sensory kinase SasA.